A 143-amino-acid chain; its full sequence is Nucleoside diphosphate kinase (143 aa).

Residues Lys11, Phe59, Arg87, Thr93, Arg104, and Asn114 each coordinate ATP. His117 serves as the catalytic Pros-phosphohistidine intermediate.

Belongs to the NDK family. Homotetramer. Mg(2+) is required as a cofactor.

It is found in the cytoplasm. The catalysed reaction is a 2'-deoxyribonucleoside 5'-diphosphate + ATP = a 2'-deoxyribonucleoside 5'-triphosphate + ADP. It carries out the reaction a ribonucleoside 5'-diphosphate + ATP = a ribonucleoside 5'-triphosphate + ADP. In terms of biological role, major role in the synthesis of nucleoside triphosphates other than ATP. The ATP gamma phosphate is transferred to the NDP beta phosphate via a ping-pong mechanism, using a phosphorylated active-site intermediate. This Shewanella oneidensis (strain ATCC 700550 / JCM 31522 / CIP 106686 / LMG 19005 / NCIMB 14063 / MR-1) protein is Nucleoside diphosphate kinase.